Reading from the N-terminus, the 327-residue chain is 1-aminocyclopropane-1-carboxylate oxidase 1 (327 aa).

Residues proline 157–proline 257 form the Fe2OG dioxygenase domain. Residues histidine 181, aspartate 183, and histidine 238 each contribute to the Fe cation site.

This sequence belongs to the iron/ascorbate-dependent oxidoreductase family. Fe cation serves as cofactor.

It catalyses the reaction 1-aminocyclopropane-1-carboxylate + L-ascorbate + O2 = ethene + L-dehydroascorbate + hydrogen cyanide + CO2 + 2 H2O. Its pathway is alkene biosynthesis; ethylene biosynthesis via S-adenosyl-L-methionine; ethylene from S-adenosyl-L-methionine: step 2/2. This is 1-aminocyclopropane-1-carboxylate oxidase 1 (ACO1) from Doritaenopsis sp. (Moth orchid).